We begin with the raw amino-acid sequence, 218 residues long: Small ribosomal subunit protein uS3c (218 aa).

A KH type-2 domain is found at 39 to 120 (IRNFMNKELL…IITCKVVGVT (82 aa)).

This sequence belongs to the universal ribosomal protein uS3 family. Part of the 30S ribosomal subunit.

The protein localises to the plastid. It is found in the chloroplast. In Euglena gracilis, this protein is Small ribosomal subunit protein uS3c (rps3).